The sequence spans 210 residues: ATP phosphoribosyltransferase (210 aa).

Belongs to the ATP phosphoribosyltransferase family. Short subfamily. Heteromultimer composed of HisG and HisZ subunits.

Its subcellular location is the cytoplasm. The enzyme catalyses 1-(5-phospho-beta-D-ribosyl)-ATP + diphosphate = 5-phospho-alpha-D-ribose 1-diphosphate + ATP. The protein operates within amino-acid biosynthesis; L-histidine biosynthesis; L-histidine from 5-phospho-alpha-D-ribose 1-diphosphate: step 1/9. Its function is as follows. Catalyzes the condensation of ATP and 5-phosphoribose 1-diphosphate to form N'-(5'-phosphoribosyl)-ATP (PR-ATP). Has a crucial role in the pathway because the rate of histidine biosynthesis seems to be controlled primarily by regulation of HisG enzymatic activity. The sequence is that of ATP phosphoribosyltransferase from Picosynechococcus sp. (strain ATCC 27264 / PCC 7002 / PR-6) (Agmenellum quadruplicatum).